The following is a 156-amino-acid chain: uncharacterized protein (156 aa).

Belongs to the mimivirus L223/L227/L812 family.

This is an uncharacterized protein from Acanthamoeba polyphaga mimivirus (APMV).